The sequence spans 181 residues: ATP synthase subunit delta (181 aa).

This sequence belongs to the ATPase delta chain family. In terms of assembly, F-type ATPases have 2 components, F(1) - the catalytic core - and F(0) - the membrane proton channel. F(1) has five subunits: alpha(3), beta(3), gamma(1), delta(1), epsilon(1). F(0) has three main subunits: a(1), b(2) and c(10-14). The alpha and beta chains form an alternating ring which encloses part of the gamma chain. F(1) is attached to F(0) by a central stalk formed by the gamma and epsilon chains, while a peripheral stalk is formed by the delta and b chains.

The protein resides in the cell inner membrane. F(1)F(0) ATP synthase produces ATP from ADP in the presence of a proton or sodium gradient. F-type ATPases consist of two structural domains, F(1) containing the extramembraneous catalytic core and F(0) containing the membrane proton channel, linked together by a central stalk and a peripheral stalk. During catalysis, ATP synthesis in the catalytic domain of F(1) is coupled via a rotary mechanism of the central stalk subunits to proton translocation. Functionally, this protein is part of the stalk that links CF(0) to CF(1). It either transmits conformational changes from CF(0) to CF(1) or is implicated in proton conduction. This is ATP synthase subunit delta from Chlorobaculum parvum (strain DSM 263 / NCIMB 8327) (Chlorobium vibrioforme subsp. thiosulfatophilum).